We begin with the raw amino-acid sequence, 113 residues long: Ribonuclease P protein component (113 aa).

This sequence belongs to the RnpA family. In terms of assembly, consists of a catalytic RNA component (M1 or rnpB) and a protein subunit.

It catalyses the reaction Endonucleolytic cleavage of RNA, removing 5'-extranucleotides from tRNA precursor.. RNaseP catalyzes the removal of the 5'-leader sequence from pre-tRNA to produce the mature 5'-terminus. It can also cleave other RNA substrates such as 4.5S RNA. The protein component plays an auxiliary but essential role in vivo by binding to the 5'-leader sequence and broadening the substrate specificity of the ribozyme. This is Ribonuclease P protein component from Geotalea uraniireducens (strain Rf4) (Geobacter uraniireducens).